The sequence spans 410 residues: Elongation factor Tu, chloroplastic (410 aa).

The 205-residue stretch at 10–214 (KPHVNIGTIG…QVDAYIPTPE (205 aa)) folds into the tr-type G domain. A G1 region spans residues 19–26 (GHVDHGKT). 19 to 26 (GHVDHGKT) is a binding site for GTP. Position 26 (Thr-26) interacts with Mg(2+). Residues 60-64 (GITIN) form a G2 region. A G3 region spans residues 81-84 (DCPG). GTP is bound by residues 81-85 (DCPGH) and 136-139 (NKED). Positions 136–139 (NKED) are G4. Positions 174-176 (SAL) are G5.

Belongs to the TRAFAC class translation factor GTPase superfamily. Classic translation factor GTPase family. EF-Tu/EF-1A subfamily.

The protein resides in the plastid. It is found in the chloroplast. It carries out the reaction GTP + H2O = GDP + phosphate + H(+). Functionally, GTP hydrolase that promotes the GTP-dependent binding of aminoacyl-tRNA to the A-site of ribosomes during protein biosynthesis. This is Elongation factor Tu, chloroplastic (tufA) from Chlorokybus atmophyticus (Soil alga).